Here is an 81-residue protein sequence, read N- to C-terminus: High-potential iron-sulfur protein (81 aa).

[4Fe-4S] cluster is bound by residues C43, C46, C59, and C73.

This sequence belongs to the high-potential iron-sulfur protein (HiPIP) family. Homodimer.

It localises to the periplasm. In terms of biological role, specific class of high-redox-potential 4Fe-4S ferredoxins. Functions in anaerobic electron transport in most purple and in some other photosynthetic bacteria and in at least one genus (Paracoccus) of halophilic, denitrifying bacteria. The polypeptide is High-potential iron-sulfur protein (Halochromatium salexigens (Chromatium salexigens)).